We begin with the raw amino-acid sequence, 363 residues long: Putative agmatine deiminase 1 (363 aa).

Cys356 acts as the Amidino-cysteine intermediate in catalysis.

It belongs to the agmatine deiminase family.

The enzyme catalyses agmatine + H2O = N-carbamoylputrescine + NH4(+). The protein is Putative agmatine deiminase 1 of Listeria monocytogenes serovar 1/2a (strain ATCC BAA-679 / EGD-e).